Here is a 93-residue protein sequence, read N- to C-terminus: Small ribosomal subunit protein uS19 (93 aa).

The protein belongs to the universal ribosomal protein uS19 family.

Functionally, protein S19 forms a complex with S13 that binds strongly to the 16S ribosomal RNA. This is Small ribosomal subunit protein uS19 from Maridesulfovibrio salexigens (strain ATCC 14822 / DSM 2638 / NCIMB 8403 / VKM B-1763) (Desulfovibrio salexigens).